The chain runs to 95 residues: MNIRPLHDRVVVRRVEEKKTTSSGLIIPDSATEKPSEGVVVAVGNGKKNDNGDTIALDVTIGNKVLFAQYAGTEIKVDGKKLLIMKEGDIVAVIK.

This sequence belongs to the GroES chaperonin family. In terms of assembly, heptamer of 7 subunits arranged in a ring. Interacts with the chaperonin GroEL.

Its subcellular location is the cytoplasm. Together with the chaperonin GroEL, plays an essential role in assisting protein folding. The GroEL-GroES system forms a nano-cage that allows encapsulation of the non-native substrate proteins and provides a physical environment optimized to promote and accelerate protein folding. GroES binds to the apical surface of the GroEL ring, thereby capping the opening of the GroEL channel. This Vesicomyosocius okutanii subsp. Calyptogena okutanii (strain HA) protein is Co-chaperonin GroES.